A 401-amino-acid polypeptide reads, in one-letter code: 1-deoxy-D-xylulose 5-phosphate reductoisomerase (401 aa).

NADPH is bound by residues threonine 11, glycine 12, serine 13, isoleucine 14, arginine 38, asparagine 39, and asparagine 125. Lysine 126 contributes to the 1-deoxy-D-xylulose 5-phosphate binding site. Glutamate 127 contacts NADPH. Mn(2+) is bound at residue aspartate 151. Residues serine 152, glutamate 153, serine 179, and histidine 202 each coordinate 1-deoxy-D-xylulose 5-phosphate. Glutamate 153 is a binding site for Mn(2+). Glycine 208 provides a ligand contact to NADPH. 1-deoxy-D-xylulose 5-phosphate is bound by residues serine 215, asparagine 220, lysine 221, and glutamate 224. Glutamate 224 contacts Mn(2+).

Belongs to the DXR family. It depends on Mg(2+) as a cofactor. Mn(2+) serves as cofactor.

It carries out the reaction 2-C-methyl-D-erythritol 4-phosphate + NADP(+) = 1-deoxy-D-xylulose 5-phosphate + NADPH + H(+). Its pathway is isoprenoid biosynthesis; isopentenyl diphosphate biosynthesis via DXP pathway; isopentenyl diphosphate from 1-deoxy-D-xylulose 5-phosphate: step 1/6. In terms of biological role, catalyzes the NADPH-dependent rearrangement and reduction of 1-deoxy-D-xylulose-5-phosphate (DXP) to 2-C-methyl-D-erythritol 4-phosphate (MEP). The protein is 1-deoxy-D-xylulose 5-phosphate reductoisomerase of Paraburkholderia xenovorans (strain LB400).